The primary structure comprises 442 residues: Testican-1 (442 aa).

A signal peptide spans 1–21 (MPAIAVLAAAAAAWCFLQVDS). 8 disulfide bridges follow: C89-C100, C94-C110, C139-C169, C142-C162, C151-C183, C316-C340, C351-C358, and C360-C379. Residues 133–185 (PSNLVKCKPCPVAQSAMVCGSDGHTYTSKCKLEFHACSTGKSLNSLCDGPCPC) form the Kazal-like domain. Residues 313-379 (GLPCQNEMNR…GSRKQGTVSC (67 aa)) form the Thyroglobulin type-1 domain. Disordered regions lie at residues 375 to 395 (GTVS…GGSV) and 420 to 442 (TRAV…GYIW). S386 and S391 each carry an O-linked (Xyl...) (glycosaminoglycan) serine glycan. Residues 425-442 (EDDEDEDDDKEDEVGYIW) show a composition bias toward acidic residues.

Contains chondroitin sulfate and heparan sulfate O-linked oligosaccharides. As to expression, predominantly expressed in the postsynaptic area of pyramidal neurons.

It is found in the secreted. The protein resides in the extracellular space. It localises to the extracellular matrix. In terms of biological role, may play a role in cell-cell and cell-matrix interactions. May contribute to various neuronal mechanisms in the central nervous system. The polypeptide is Testican-1 (Spock1) (Mus musculus (Mouse)).